Reading from the N-terminus, the 561-residue chain is Asparagine synthetase [glutamine-hydrolyzing] (561 aa).

Cys2 (for GATase activity) is an active-site residue. Residues 2-191 enclose the Glutamine amidotransferase type-2 domain; the sequence is CGIWALFGSD…PGHYEVLDLK (190 aa). Residues 49 to 53, 75 to 77, and Asp97 contribute to the L-glutamine site; these read RLAVV and NGE. In terms of domain architecture, Asparagine synthetase spans 213 to 536; that stretch reads HALYDNVEKL…PGRADWLSHY (324 aa). Residues Leu256, Ile288, and 363–364 contribute to the ATP site; that span reads SG. Residue Lys385 is modified to N6-acetyllysine. Thr545 is subject to Phosphothreonine. The residue at position 557 (Ser557) is a Phosphoserine.

It carries out the reaction L-aspartate + L-glutamine + ATP + H2O = L-asparagine + L-glutamate + AMP + diphosphate + H(+). It participates in amino-acid biosynthesis; L-asparagine biosynthesis; L-asparagine from L-aspartate (L-Gln route): step 1/1. The chain is Asparagine synthetase [glutamine-hydrolyzing] (ASNS) from Homo sapiens (Human).